We begin with the raw amino-acid sequence, 463 residues long: Quinolone resistance protein NorB (463 aa).

The next 14 membrane-spanning stretches (helical) occupy residues 17 to 37 (IGIV…VNVV), 53 to 73 (IAVS…GGLA), 86 to 106 (IILN…LLLI), 107 to 127 (IGRL…LSII), 142 to 162 (YWSI…GAVA), 165 to 185 (LGWR…LFLI), 201 to 221 (FDIK…ILIT), 230 to 250 (SLLF…FIVL), 273 to 293 (TASN…NTFV), 299 to 319 (YSSL…LIMI), 334 to 354 (PMLI…LTFL), 357 to 377 (IFYV…LGIY), 403 to 423 (MASA…YAIV), and 435 to 455 (IALW…LLLV).

The protein belongs to the major facilitator superfamily. TCR/Tet family.

Its subcellular location is the cell membrane. Its function is as follows. Multidrug efflux pump that acts independently of NorA and is one of the factors that confers resistance against diverse quinolones and chemical compounds. The polypeptide is Quinolone resistance protein NorB (norB) (Staphylococcus aureus (strain COL)).